The following is a 92-amino-acid chain: Acylphosphatase (92 aa).

Cys-5 and Cys-49 are oxidised to a cystine. An Acylphosphatase-like domain is found at 5 to 92 (CIIAWIYGRV…SGELTDFRIR (88 aa)). Catalysis depends on residues Arg-20 and Asn-38.

This sequence belongs to the acylphosphatase family.

The enzyme catalyses an acyl phosphate + H2O = a carboxylate + phosphate + H(+). The protein is Acylphosphatase of Escherichia coli O1:K1 / APEC.